We begin with the raw amino-acid sequence, 472 residues long: Ribosomal protein uS12 methylthiotransferase RimO (472 aa).

The MTTase N-terminal domain maps to 33-143 (NRIGFVSLGC…VLKHVHKYVP (111 aa)). Residues Cys-42, Cys-78, Cys-107, Cys-175, Cys-179, and Cys-182 each contribute to the [4Fe-4S] cluster site. The Radical SAM core domain maps to 161–398 (LTPKHYAYLK…MEVQAEISAE (238 aa)). Positions 401–467 (ARFVGRTLDI…EHDLWAEVVD (67 aa)) constitute a TRAM domain.

The protein belongs to the methylthiotransferase family. RimO subfamily. [4Fe-4S] cluster is required as a cofactor.

Its subcellular location is the cytoplasm. The enzyme catalyses L-aspartate(89)-[ribosomal protein uS12]-hydrogen + (sulfur carrier)-SH + AH2 + 2 S-adenosyl-L-methionine = 3-methylsulfanyl-L-aspartate(89)-[ribosomal protein uS12]-hydrogen + (sulfur carrier)-H + 5'-deoxyadenosine + L-methionine + A + S-adenosyl-L-homocysteine + 2 H(+). Catalyzes the methylthiolation of an aspartic acid residue of ribosomal protein uS12. The sequence is that of Ribosomal protein uS12 methylthiotransferase RimO from Shewanella baltica (strain OS155 / ATCC BAA-1091).